The primary structure comprises 53 residues: Tsetse thrombin inhibitor (53 aa).

An N-terminal signal peptide occupies residues 1-21 (MKFFTVLFFLLSIIYLIVAAP).

As to expression, expressed at high levels in salivary glands and midguts of adult tsetse flies.

It localises to the secreted. In terms of biological role, potent and specific inhibitor of human thrombin. It is also a potent inhibitor of thrombin-induced platelet aggregation. It is capable of antagonizing host hemostasis and facilitating blood feeding. The protein is Tsetse thrombin inhibitor (TTI) of Glossina morsitans morsitans (Savannah tsetse fly).